An 839-amino-acid polypeptide reads, in one-letter code: MDYLTTFTGKSGRLLRGTASRLWGLGGGGEARQVRFEDYLREPAPGDPGCGPGELRPPSPTSPEGPDTGQKKTLDKKDGRRMSFQKPKGTIEYTVESRDSLNSIALKFDTTPNELVQLNKLFSRAVVTGQVLYVPDPEYVSSVESSPSLSPVSPLSPTSSEAEFDKTTTPDVVHPKEAPPSSTESSIRPARVVSSTSEEEEAFTEKFLKINCKYITNGKGTVSGVLLVTPNNIMFDPHKTDPLVQENGCEEYGIMCPMEEVMSAAMYKEILDSKLKESLPIEVDQLSGRGFCHSKKMTGVPAEETDSRSRDQGNDSVSTAPRSTEESLSEDVFTESELSPIREELPSSELRQEKSSDASSESVQTVSQIEVESLTAASESADVPDHTNANSGRSSSEVGALSHETGLSSLEIATKEGDKATGNLQEVSGPKEQSTDIKGQDNQDSFHHENSLQQEAGEDSLSSGETVELTEKPTVLKDQQGKELKRDSETEVEELRKLWKTHSMQQAKQQRDTIQQVAQRESKHRGAPADAHGEGSSLLKEKRRHRLHKFLCLRVGKPMRKTFVSQASATMQQYAQRDKKHEYWFAVPQERTDHLYAFFIQWSPEIYAEDTGEYTREPGFIVVKKMAESGPDEAPAGEAAAREWEITTREDINSKQAAPAKADLEPESFRPNLSDPSELLLPDQIEKLTKHLPPRTIGYPWTLVYGTGKHGTSLKTLYRTMTGLDTPVLMVIKDSDGQVFGALASEPFKVSDGFYGTGETFVFTFCPEFEVFKWTGDNMFFIKGDMDSLAFGGGGGEFALWLDGDLYHGRSHSCKTFGNHTLSKKEDFFIQDIEIWAFE.

A disordered region spans residues 38–91 (DYLREPAPGDPGCGPGELRPPSPTSPEGPDTGQKKTLDKKDGRRMSFQKPKGTI). Residues 69–81 (GQKKTLDKKDGRR) are compositionally biased toward basic and acidic residues. Ser-83 is subject to Phosphoserine. Residues 91-134 (IEYTVESRDSLNSIALKFDTTPNELVQLNKLFSRAVVTGQVLYV) form the LysM domain. A Phosphothreonine modification is found at Thr-111. Positions 140–161 (VSSVESSPSLSPVSPLSPTSSE) are enriched in low complexity. The segment at 140–195 (VSSVESSPSLSPVSPLSPTSSEAEFDKTTTPDVVHPKEAPPSSTESSIRPARVVSS) is disordered. Over residues 163 to 177 (EFDKTTTPDVVHPKE) the composition is skewed to basic and acidic residues. 3 positions are modified to phosphoserine: Ser-194, Ser-195, and Ser-197. A GRAM domain is found at 206–261 (KFLKINCKYITNGKGTVSGVLLVTPNNIMFDPHKTDPLVQENGCEEYGIMCPMEEV). Phosphoserine is present on residues Ser-287, Ser-327, and Ser-329. Disordered regions lie at residues 292 to 401 (CHSK…VGAL) and 415 to 540 (KEGD…SLLK). Position 334 is a phosphothreonine (Thr-334). Ser-339 is subject to Phosphoserine. Basic and acidic residues predominate over residues 340 to 356 (PIREELPSSELRQEKSS). Polar residues-rich tracts occupy residues 357 to 378 (DASS…TAAS) and 387 to 397 (TNANSGRSSSE). Composition is skewed to basic and acidic residues over residues 433 to 450 (QSTD…HHEN) and 469 to 497 (LTEK…ELRK). Ser-488 carries the phosphoserine modification. The segment covering 502-519 (HSMQQAKQQRDTIQQVAQ) has biased composition (polar residues). Positions 543-570 (RRHRLHKFLCLRVGKPMRKTFVSQASAT) are mediates oxidative antimutator activity. Residues 648–677 (TREDINSKQAAPAKADLEPESFRPNLSDPS) form a disordered region. A TLDc domain is found at 678–839 (ELLLPDQIEK…IQDIEIWAFE (162 aa)).

The protein belongs to the OXR1 family.

The protein localises to the mitochondrion. Functionally, may be involved in protection from oxidative damage. The sequence is that of Oxidation resistance protein 1 (Oxr1) from Rattus norvegicus (Rat).